The sequence spans 474 residues: uncharacterized protein (474 aa).

Residues 3-23 (LTLWLVLGAVGVGAVGTGVGF) form a helical membrane-spanning segment. Positions 171–296 (VSDGSSSKTR…KETKDRTKVD (126 aa)) are disordered. Residues 180-210 (RTPKKTKTSKKKPIKKKSSKSKSSKGSKKQK) are compositionally biased toward basic residues. Residues 231 to 253 (TRSQSKQQKGQEQATDQTDSEGV) show a composition bias toward polar residues. The span at 257–266 (EGADNTDTEL) shows a compositional bias: acidic residues. Positions 267–281 (VETTAETTEQEATTK) are enriched in low complexity. Positions 282–296 (STKDTKETKDRTKVD) are enriched in basic and acidic residues.

The protein localises to the membrane. This is an uncharacterized protein from Mycoplasma pneumoniae (strain ATCC 29342 / M129 / Subtype 1) (Mycoplasmoides pneumoniae).